The following is a 593-amino-acid chain: Actin-histidine N-methyltransferase (593 aa).

Residues 1-21 (MGKKSRVKTQKSGTGATAAVS) form a disordered region. Residues Arg-75, 104 to 106 (EGF), Arg-254, 275 to 279 (DMCNH), and 325 to 327 (SGF) each bind S-adenosyl-L-methionine. The region spanning 94-314 (EGFEIANFEE…AGEQIYIFYG (221 aa)) is the SET domain. A disordered region spans residues 549–593 (GFVNGENSLFNGTKSESENLIKEESNRETEDAKESSSESTDEVKE). Positions 553-562 (GENSLFNGTK) are enriched in polar residues. The segment covering 563 to 593 (SESENLIKEESNRETEDAKESSSESTDEVKE) has biased composition (basic and acidic residues).

This sequence belongs to the class V-like SAM-binding methyltransferase superfamily. SETD3 actin-histidine methyltransferase family.

Its subcellular location is the cytoplasm. It carries out the reaction L-histidyl-[protein] + S-adenosyl-L-methionine = N(tele)-methyl-L-histidyl-[protein] + S-adenosyl-L-homocysteine + H(+). In terms of biological role, protein-histidine N-methyltransferase that specifically mediates 3-methylhistidine (tele-methylhistidine) methylation of actin at 'His-73'. Does not have protein-lysine N-methyltransferase activity and probably only catalyzes histidine methylation of actin. This is Actin-histidine N-methyltransferase from Gallus gallus (Chicken).